A 200-amino-acid chain; its full sequence is Prolactin (200 aa).

Disulfide bonds link Cys-4/Cys-11, Cys-59/Cys-175, and Cys-192/Cys-200.

It belongs to the somatotropin/prolactin family. In terms of tissue distribution, pituitary gland.

It is found in the secreted. This Protopterus aethiopicus (Marbled lungfish) protein is Prolactin (prl).